Here is a 370-residue protein sequence, read N- to C-terminus: Pyrimidine monooxygenase RutA (370 aa).

FMN contacts are provided by residues 49–50 (IK), N115, E124, 140–141 (RY), and S190.

The protein belongs to the NtaA/SnaA/DszA monooxygenase family. RutA subfamily.

The catalysed reaction is uracil + FMNH2 + NADH + O2 = (Z)-3-ureidoacrylate + FMN + NAD(+) + H2O + H(+). It carries out the reaction thymine + FMNH2 + NADH + O2 = (Z)-2-methylureidoacrylate + FMN + NAD(+) + H2O + H(+). In terms of biological role, catalyzes the pyrimidine ring opening between N-3 and C-4 by an unusual flavin hydroperoxide-catalyzed mechanism, adding oxygen atoms in the process to yield ureidoacrylate peracid, that immediately reacts with FMN forming ureidoacrylate and FMN-N(5)-oxide. The FMN-N(5)-oxide reacts spontaneously with NADH to produce FMN. Requires the flavin reductase RutF to regenerate FMN in vivo. The polypeptide is Pyrimidine monooxygenase RutA (Variovorax paradoxus (strain S110)).